A 902-amino-acid chain; its full sequence is Magnesium-transporting ATPase, P-type 1 (902 aa).

Residues 1-98 (MLKIITRQLF…KPSPWWVHLW (98 aa)) are Cytoplasmic-facing. Residues 99–119 (VCYRNPFNILLTILGGISYAT) form a helical membrane-spanning segment. A topological domain (extracellular) is located at residue glutamate 120. A helical transmembrane segment spans residues 121–141 (DLFAAGVIALMVGISTLLNFV). At 142-291 (QEARSTKAAD…QNAFQKGISR (150 aa)) the chain is on the cytoplasmic side. The helical transmembrane segment at 292–312 (VSMLLIRFMLVMAPVVLIING) threads the bilayer. The Extracellular segment spans residues 313–321 (YTKGDWWEA). A helical membrane pass occupies residues 322 to 339 (ALFALSVAVGLTPEMLPM). Residue glutamate 335 coordinates Mg(2+). Topologically, residues 340 to 699 (IVTSTLARGA…IEGRRTFSNM (360 aa)) are cytoplasmic. Aspartate 377 functions as the 4-aspartylphosphate intermediate in the catalytic mechanism. Mg(2+)-binding residues include aspartate 645, aspartate 649, and asparagine 713. Residues 700–719 (LKYIKMTASSNFGNVFSVLV) form a helical membrane-spanning segment. Residues 720 to 728 (ASAFLPFLP) are Extracellular-facing. A helical transmembrane segment spans residues 729–748 (MLPLHLLIQNLLYDVSQVAI). Residues asparagine 738 and aspartate 742 each coordinate Mg(2+). Residues 749–770 (PFDNVDEEQIQKPQRWNPADLG) are Cytoplasmic-facing. A helical transmembrane segment spans residues 771 to 794 (RFMVFFGPISSIFDILTFCLMWWV). The Extracellular portion of the chain corresponds to 795–803 (FHANTPETQ). Residues 804–822 (TLFQSGWFVVGLLSQTLIV) form a helical membrane-spanning segment. Topologically, residues 823–835 (HMIRTRRLPFIQS) are cytoplasmic. The chain crosses the membrane as a helical span at residues 836–855 (RAAWPLMAMTLLVMVVGVSL). The Extracellular segment spans residues 856-870 (PFSPLASYLQLQALP). Residues 871 to 890 (LSYFPWLIAILVGYMTLTQL) form a helical membrane-spanning segment. Over 891–902 (VKGFYSRRYGWQ) the chain is Cytoplasmic.

It belongs to the cation transport ATPase (P-type) (TC 3.A.3) family. Type IIIB subfamily.

The protein resides in the cell inner membrane. The catalysed reaction is Mg(2+)(out) + ATP + H2O = Mg(2+)(in) + ADP + phosphate + H(+). Its function is as follows. Mediates magnesium influx to the cytosol. This is Magnesium-transporting ATPase, P-type 1 (mgtA) from Salmonella typhimurium (strain 14028s / SGSC 2262).